A 239-amino-acid chain; its full sequence is Small ribosomal subunit protein uS3 (239 aa).

Residues 40 to 108 form the KH type-2 domain; the sequence is RGLLEKELYS…VALNVQEVQN (69 aa). Positions 212–239 are disordered; it reads KPKARPELPKAEERPRRRRPAVRVKKEE. Over residues 215–226 the composition is skewed to basic and acidic residues; sequence ARPELPKAEERP. A compositionally biased stretch (basic residues) spans 227–239; sequence RRRRPAVRVKKEE.

The protein belongs to the universal ribosomal protein uS3 family. In terms of assembly, part of the 30S ribosomal subunit. Forms a tight complex with proteins S10 and S14.

In terms of biological role, binds the lower part of the 30S subunit head. Binds mRNA in the 70S ribosome, positioning it for translation. This Thermus thermophilus (strain ATCC BAA-163 / DSM 7039 / HB27) protein is Small ribosomal subunit protein uS3 (rpsC).